The following is a 372-amino-acid chain: UDP-N-acetylenolpyruvoylglucosamine reductase (372 aa).

The FAD-binding PCMH-type domain maps to 29–205 (VGPTARRLIT…LEVEFALDAS (177 aa)). Arg-177 is a catalytic residue. Residue Ser-260 is the Proton donor of the active site. The active site involves Glu-364.

It belongs to the MurB family. Requires FAD as cofactor.

It localises to the cytoplasm. The enzyme catalyses UDP-N-acetyl-alpha-D-muramate + NADP(+) = UDP-N-acetyl-3-O-(1-carboxyvinyl)-alpha-D-glucosamine + NADPH + H(+). It functions in the pathway cell wall biogenesis; peptidoglycan biosynthesis. Its function is as follows. Cell wall formation. This Mycobacterium avium (strain 104) protein is UDP-N-acetylenolpyruvoylglucosamine reductase.